The chain runs to 180 residues: Large ribosomal subunit protein uL5 (180 aa).

It belongs to the universal ribosomal protein uL5 family. As to quaternary structure, part of the 50S ribosomal subunit; part of the 5S rRNA/L5/L18/L25 subcomplex. Contacts the 5S rRNA and the P site tRNA. Forms a bridge to the 30S subunit in the 70S ribosome.

This is one of the proteins that bind and probably mediate the attachment of the 5S RNA into the large ribosomal subunit, where it forms part of the central protuberance. In the 70S ribosome it contacts protein S13 of the 30S subunit (bridge B1b), connecting the 2 subunits; this bridge is implicated in subunit movement. Contacts the P site tRNA; the 5S rRNA and some of its associated proteins might help stabilize positioning of ribosome-bound tRNAs. This is Large ribosomal subunit protein uL5 from Spiroplasma kunkelii.